The following is a 287-amino-acid chain: tRNA selenocysteine 1-associated protein 1 (287 aa).

RRM domains follow at residues Ala-3 to Tyr-86 and Tyr-96 to Pro-175.

This sequence belongs to the RRM TRSPAP family. Component of the tRNA(Sec) complex composed at least of EEFSEC, SECISBP2, SEPHS1, SEPSECS, TRNAU1AP and tRNA(Sec). Found in a complex with tRNA(Sec). Interacts with SEPSECS. Associates with mRNP and/or polysomes. Found in a complex with EEFSEC, SECISBP2, TRNAU1AP and tRNA(Sec).

The protein localises to the nucleus. Its subcellular location is the cytoplasm. In terms of biological role, involved in the early steps of selenocysteine biosynthesis and tRNA(Sec) charging to the later steps resulting in the cotranslational incorporation of selenocysteine into selenoproteins. Stabilizes the SECISBP2, EEFSEC and tRNA(Sec) complex. May be involved in the methylation of tRNA(Sec). Enhances efficiency of selenoproteins synthesis. This is tRNA selenocysteine 1-associated protein 1 (TRNAU1AP) from Pongo abelii (Sumatran orangutan).